We begin with the raw amino-acid sequence, 1277 residues long: Membrane-associated guanylate kinase, WW and PDZ domain-containing protein 2 (1277 aa).

In terms of domain architecture, PDZ spans 17–101 (ESVIGRNPEG…PLRLKCVKQG (85 aa)). One can recognise a Guanylate kinase-like domain in the interval 109 to 283 (RHYLNLRFQK…APVYSQPEEL (175 aa)). The disordered stretch occupies residues 205–308 (PGATPSAEGK…EDSDPLPDNW (104 aa)). Residues 281 to 296 (EELKDQMDDTKSTKPE) are compositionally biased toward basic and acidic residues. 2 consecutive WW domains span residues 302-335 (DPLPDNWEMAYTEKGEVYFIDHNTKTTSWLDPRL) and 348-381 (NELPYGWEKIDDPIYGTYYVDHINRRTQFENPVL). The tract at residues 302-381 (DPLPDNWEMA…RRTQFENPVL (80 aa)) is interaction with DDN. Tyrosine 362 carries the post-translational modification Phosphotyrosine. Residues 426–510 (STTLKKSNMG…SVNLVLCRGY (85 aa)) form the PDZ 1 domain. The interval 556 to 575 (QSVPDITDRPPHSLHSMPAD) is disordered. The PDZ 2 domain occupies 605–683 (TLTIVKGAKG…ETSLIIHRGG (79 aa)). A Phosphoserine modification is found at serine 686. The PDZ 3 domain maps to 778-860 (DVHLRRMESG…NGQVNLTVRR (83 aa)). Tyrosine 827 is subject to Phosphotyrosine. The segment at 869–913 (CPENGRSPGSVSTHHSSPRSDYATYANSNHAAPSNNASPPEGFAS) is disordered. 2 positions are modified to phosphoserine: serine 884 and serine 885. The segment covering 894–908 (ANSNHAAPSNNASPP) has biased composition (low complexity). Positions 920 to 1010 (DVIIHRKENE…SVTLRIIPQE (91 aa)) constitute a PDZ 4 domain. The span at 1011–1042 (ELNNPTSAPSSEKQSPMAQQHSPLAQQHSPLA) shows a compositional bias: polar residues. The interval 1011–1130 (ELNNPTSAPS…PDTRQYPLSD (120 aa)) is disordered. Basic and acidic residues predominate over residues 1069 to 1085 (NSYRSEVKARQDVKPDI). Residues 1141–1223 (TVDMEKGAKG…RVRLLLKRGT (83 aa)) enclose the PDZ 5 domain.

It belongs to the MAGUK family. In terms of assembly, interacts (via its WW domains) with DRPLA. Interacts with CTNNB1, ACVR2A, SMAD2 and SMAD3. Part of a complex consisting of MAGI2/ARIP1, ACVR2A, ACVR1B and SMAD3. May interact with HTR2A and IGSF9. Interacts with HTR4. Interacts (via guanylate kinase domain) with DLGAP1. Interacts (via PDZ domains) with GRIN2A, GRID2 and NLGN1. Interacts with CTNND2. Interacts with MAGUIN-1. Interacts (via its second PDZ domain) with PTEN (via unphosphorylated C-terminus); this interaction diminishes the degradation rate of PTEN. Found in a complex, at least composed of KIDINS220, MAGI2, NTRK1 and RAPGEF2; the complex is mainly formed at late endosomes in a NGF-dependent manner. Interacts with RAPGEF2; the interaction occurs before or after nerve growth factor (NGF) stimulation. Isoform 1 interacts (via PDZ domain) with KIDINS220 isoform 2 (via C-terminal domain). Interacts with DDN. Identified in a complex with ACTN4, CASK, IQGAP1, NPHS1, SPTAN1 and SPTBN1. Interacts with DLL1. Found in a complex with IGSF9B and NLGN2; the interaction with IGSF9B is mediated via the PDZ 5 and PDZ 6 domains, while the interaction with NLGN2 is mediated via the WW1, WW2 and PDZ2 domains. Interacts (via PDZ 6 domain) with USH1G (via SAM domain); the interaction is triggered by phosphorylation of USH1G by CK2 and negatively regulates MAGI2-mediated endocytosis. Expressed in the foot process layer of podocytes of the kidney glomeruli but not in tubules (at protein level). Expressed in the brain.

It localises to the cytoplasm. The protein resides in the late endosome. It is found in the synapse. The protein localises to the synaptosome. Its subcellular location is the cell membrane. It localises to the cytoskeleton. The protein resides in the microtubule organizing center. It is found in the centrosome. The protein localises to the cell projection. Its subcellular location is the cilium. It localises to the centriole. The protein resides in the photoreceptor inner segment. It is found in the photoreceptor outer segment. Functionally, seems to act as scaffold molecule at synaptic junctions by assembling neurotransmitter receptors and cell adhesion proteins. Plays a role in nerve growth factor (NGF)-induced recruitment of RAPGEF2 to late endosomes and neurite outgrowth. May play a role in regulating activin-mediated signaling in neuronal cells. Enhances the ability of PTEN to suppress AKT1 activation. Plays a role in receptor-mediated clathrin-dependent endocytosis which is required for ciliogenesis. The sequence is that of Membrane-associated guanylate kinase, WW and PDZ domain-containing protein 2 (Magi2) from Rattus norvegicus (Rat).